A 175-amino-acid polypeptide reads, in one-letter code: Arsenite oxidase subunit AioB (175 aa).

The tat-type signal signal peptide spans 1–32 (MSDTINLTRRGFLKVSGSGVAVAATLSPIASA). The 97-residue stretch at 62–158 (NEPVSFTYPD…LRYDEASDAL (97 aa)) folds into the Rieske domain. The [2Fe-2S] cluster site is built by Cys-102, His-104, Cys-120, and His-123. Cys-107 and Cys-122 are oxidised to a cystine.

Belongs to the AOX family. As to quaternary structure, heterodimer consisting of a large and a small subunit. Requires [2Fe-2S] cluster as cofactor. Post-translationally, predicted to be exported by the Tat system. The position of the signal peptide cleavage has not been experimentally proven.

The catalysed reaction is 2 oxidized [azurin] + arsenite + H2O = 2 reduced [azurin] + arsenate + 3 H(+). Functionally, involved in the detoxification of arsenic. Oxidizes As(III)O3(3-) (arsenite) to the somewhat less toxic As(V)O4(3-) (arsenate). In Alcaligenes faecalis, this protein is Arsenite oxidase subunit AioB (aioB).